The following is a 736-amino-acid chain: Na(+)/H(+) antiporter NhaA (736 aa).

A na(+)/H(+) antiporter NhaA region spans residues 1–387 (MNHSPQSARP…ICGYLLLRAA (387 aa)). 11 helical membrane-spanning segments follow: residues 23–43 (AGGI…NSPF), 58–78 (LSLA…LVGL), 96–116 (MLPG…FAVL), 126–146 (GWAV…SLLG), 155–175 (VFLA…IAIF), 178–198 (AEIS…LFVM), 201–221 (MDVV…FFVF), 265–285 (VAFI…FKGL), 298–318 (ILLG…WLAI), 334–354 (LYGV…IGLL), and 367–387 (IGVL…LRAA). A peptidase S49 region spans residues 388-736 (RPDQSAANPL…EKAIWARYGL (349 aa)).

The protein in the N-terminal section; belongs to the NhaA Na(+)/H(+) (TC 2.A.33) antiporter family. It in the C-terminal section; belongs to the peptidase S49 family.

It is found in the cell inner membrane. It catalyses the reaction Na(+)(in) + 2 H(+)(out) = Na(+)(out) + 2 H(+)(in). Functionally, na(+)/H(+) antiporter that extrudes sodium in exchange for external protons. The protein is Na(+)/H(+) antiporter NhaA of Brucella melitensis biotype 1 (strain ATCC 23456 / CCUG 17765 / NCTC 10094 / 16M).